The following is a 347-amino-acid chain: GMP reductase (347 aa).

108–131 (ADFEKTKQILDLNPALNFVCIDVA) is an NADP(+) binding site. The K(+) site is built by Gly-181 and Gly-183. Cys-186 acts as the Thioimidate intermediate in catalysis. NADP(+) is bound at residue 216–239 (IVSDGGCTTPGDVAKAFGGGADFV).

It belongs to the IMPDH/GMPR family. GuaC type 1 subfamily. Homotetramer.

The enzyme catalyses IMP + NH4(+) + NADP(+) = GMP + NADPH + 2 H(+). Catalyzes the irreversible NADPH-dependent deamination of GMP to IMP. It functions in the conversion of nucleobase, nucleoside and nucleotide derivatives of G to A nucleotides, and in maintaining the intracellular balance of A and G nucleotides. This chain is GMP reductase, found in Shigella flexneri.